We begin with the raw amino-acid sequence, 212 residues long: Thymidylate kinase (212 aa).

Residue 11–18 (GLEGAGKT) coordinates ATP.

This sequence belongs to the thymidylate kinase family.

It carries out the reaction dTMP + ATP = dTDP + ADP. Its function is as follows. Phosphorylation of dTMP to form dTDP in both de novo and salvage pathways of dTTP synthesis. The chain is Thymidylate kinase from Buchnera aphidicola subsp. Schizaphis graminum (strain Sg).